Reading from the N-terminus, the 362-residue chain is Peptide chain release factor 1 (362 aa).

Q237 bears the N5-methylglutamine mark.

It belongs to the prokaryotic/mitochondrial release factor family. In terms of processing, methylated by PrmC. Methylation increases the termination efficiency of RF1.

It localises to the cytoplasm. Its function is as follows. Peptide chain release factor 1 directs the termination of translation in response to the peptide chain termination codons UAG and UAA. The sequence is that of Peptide chain release factor 1 from Vibrio vulnificus (strain CMCP6).